The primary structure comprises 129 residues: Small ribosomal subunit protein uS11 (129 aa).

Belongs to the universal ribosomal protein uS11 family. Part of the 30S ribosomal subunit. Interacts with proteins S7 and S18. Binds to IF-3.

Its function is as follows. Located on the platform of the 30S subunit, it bridges several disparate RNA helices of the 16S rRNA. Forms part of the Shine-Dalgarno cleft in the 70S ribosome. The sequence is that of Small ribosomal subunit protein uS11 from Limosilactobacillus reuteri (strain DSM 20016) (Lactobacillus reuteri).